A 106-amino-acid polypeptide reads, in one-letter code: Putative double-stranded DNA mimic protein VP1949 (106 aa).

The protein belongs to the putative dsDNA mimic protein family.

Its function is as follows. May act as a double-stranded DNA (dsDNA) mimic. Probably regulates the activity of a dsDNA-binding protein. This is Putative double-stranded DNA mimic protein VP1949 from Vibrio parahaemolyticus serotype O3:K6 (strain RIMD 2210633).